A 161-amino-acid polypeptide reads, in one-letter code: Ribonuclease P protein component 2 (161 aa).

It belongs to the eukaryotic/archaeal RNase P protein component 2 family. As to quaternary structure, consists of a catalytic RNA component and at least 4-5 protein subunits.

The protein localises to the cytoplasm. The enzyme catalyses Endonucleolytic cleavage of RNA, removing 5'-extranucleotides from tRNA precursor.. In terms of biological role, part of ribonuclease P, a protein complex that generates mature tRNA molecules by cleaving their 5'-ends. The polypeptide is Ribonuclease P protein component 2 (Methanopyrus kandleri (strain AV19 / DSM 6324 / JCM 9639 / NBRC 100938)).